Here is a 362-residue protein sequence, read N- to C-terminus: Type-2 angiotensin II receptor (362 aa).

At 1 to 44 (MKANFSLATISKNITSSLHVGFVNISSNESTFNCSHKPSDKHLD) the chain is on the extracellular side. N-linked (GlcNAc...) asparagine glycosylation is found at Asn4, Asn13, Asn24, Asn28, and Asn33. 2 disulfide bridges follow: Cys34-Cys289 and Cys116-Cys194. Residues 45–69 (AIPVLYYIIFGVGFLVNTIVVTLFC) form a helical membrane-spanning segment. The Cytoplasmic segment spans residues 70–79 (CQKGPKKVSS). Residues 80-103 (IYIFNLAVADLLLLATLPLWATYY) form a helical membrane-spanning segment. Residues Tyr102 and Tyr103 each coordinate angiotensin II. Topologically, residues 104 to 113 (SHRYDWIFGP) are extracellular. Residues 114–139 (VMCKVFGSFLTLNMFASIFFITCMSV) form a helical membrane-spanning segment. The Cytoplasmic portion of the chain corresponds to 140 to 158 (DRYQSVIYPFLSQRRNPWQ). Residues 159 to 180 (ASYIVPLVWCMACLSSLPTFYF) traverse the membrane as a helical segment. Angiotensin II is bound by residues Arg181, Tyr203, and Lys214. The Extracellular segment spans residues 181-205 (RDVRTIEYLGVNACIMAFPPEKYAQ). The helical transmembrane segment at 206–231 (WSAGIALMKNILGFIIPLIFIATCYF) threads the bilayer. The Cytoplasmic portion of the chain corresponds to 232–256 (GIRKHLLKTNSYGKNRITRDQVLKM). The helical transmembrane segment at 257–280 (AAAVVLAFIICWLPFHVLTFLDAL) threads the bilayer. Asp278 is an angiotensin II binding site. Residues 281–293 (AWMGVINSCEVIA) are Extracellular-facing. Residues 294–319 (VIDLALPFAILLGFTNSCINPFLYCF) traverse the membrane as a helical segment. An angiotensin II-binding site is contributed by Asp296. Residues 320–362 (VGNRFQQKLRRVFRVPITWLQGKRENGSCGKSSSFREMETFVS) lie on the Cytoplasmic side of the membrane. Residues 323-332 (RFQQKLRRVF) form a helix VIII region.

This sequence belongs to the G-protein coupled receptor 1 family. As to quaternary structure, interacts with MTUS1.

Its subcellular location is the cell membrane. Its function is as follows. Receptor for angiotensin II, a vasoconstricting peptide. Signals primarily via a non-canonical G-protein- and beta-arrestin independent pathways. Cooperates with MTUS1 to inhibit ERK2 activation and cell proliferation. The chain is Type-2 angiotensin II receptor (AGTR2) from Ovis aries (Sheep).